The sequence spans 177 residues: Large ribosomal subunit protein uL6 (177 aa).

Belongs to the universal ribosomal protein uL6 family. As to quaternary structure, part of the 50S ribosomal subunit.

Functionally, this protein binds to the 23S rRNA, and is important in its secondary structure. It is located near the subunit interface in the base of the L7/L12 stalk, and near the tRNA binding site of the peptidyltransferase center. This Bordetella avium (strain 197N) protein is Large ribosomal subunit protein uL6.